The chain runs to 483 residues: GTPase Der (483 aa).

2 consecutive EngA-type G domains span residues 3–167 (FTLA…GEER) and 212–387 (LRIA…EIWN). Residues 9 to 16 (GRPNVGKS), 56 to 60 (DTAGL), 119 to 122 (NKAE), 218 to 225 (GRPNAGKS), 265 to 269 (DTAGM), and 330 to 333 (NKWD) contribute to the GTP site. Residues 388–472 (RRISTGRLNR…PIRLSLRTSD (85 aa)) enclose the KH-like domain.

It belongs to the TRAFAC class TrmE-Era-EngA-EngB-Septin-like GTPase superfamily. EngA (Der) GTPase family. As to quaternary structure, associates with the 50S ribosomal subunit.

In terms of biological role, GTPase that plays an essential role in the late steps of ribosome biogenesis. The protein is GTPase Der of Brucella melitensis biotype 2 (strain ATCC 23457).